The primary structure comprises 498 residues: Lysine--tRNA ligase (498 aa).

Mg(2+) contacts are provided by glutamate 408 and glutamate 415.

Belongs to the class-II aminoacyl-tRNA synthetase family. As to quaternary structure, homodimer. Requires Mg(2+) as cofactor.

The protein resides in the cytoplasm. It carries out the reaction tRNA(Lys) + L-lysine + ATP = L-lysyl-tRNA(Lys) + AMP + diphosphate. The polypeptide is Lysine--tRNA ligase (Listeria innocua serovar 6a (strain ATCC BAA-680 / CLIP 11262)).